Consider the following 93-residue polypeptide: Large ribosomal subunit protein uL23 (93 aa).

Belongs to the universal ribosomal protein uL23 family. Part of the 50S ribosomal subunit. Contacts protein L29, and trigger factor when it is bound to the ribosome.

Its function is as follows. One of the early assembly proteins it binds 23S rRNA. One of the proteins that surrounds the polypeptide exit tunnel on the outside of the ribosome. Forms the main docking site for trigger factor binding to the ribosome. In Campylobacter lari (strain RM2100 / D67 / ATCC BAA-1060), this protein is Large ribosomal subunit protein uL23.